The sequence spans 320 residues: Rhomboid-like protein 17, chloroplastic (320 aa).

A chloroplast-targeting transit peptide spans 1-87; that stretch reads MHAIFSSFSR…LKFGNVMESR (87 aa). The next 5 helical transmembrane spans lie at 116-136, 160-180, 199-219, 247-267, and 295-315; these read WINGANGVVFGLVIANAAVFT, LITSGFSHIGTSQIILNMIGI, LYFAGALGGSVCFLSYHALLA, MFAIALLDMFIYPKVTTYFAL, and IASSSGQLGGVVVAAMAWARI.

Belongs to the peptidase S54 family.

Its subcellular location is the plastid. The protein localises to the chloroplast membrane. Functionally, probable rhomboid-type serine protease that catalyzes intramembrane proteolysis. The polypeptide is Rhomboid-like protein 17, chloroplastic (Arabidopsis thaliana (Mouse-ear cress)).